The sequence spans 100 residues: Integration host factor subunit alpha (100 aa).

Belongs to the bacterial histone-like protein family. Heterodimer of an alpha and a beta chain.

Functionally, this protein is one of the two subunits of integration host factor, a specific DNA-binding protein that functions in genetic recombination as well as in transcriptional and translational control. The chain is Integration host factor subunit alpha from Alcanivorax borkumensis (strain ATCC 700651 / DSM 11573 / NCIMB 13689 / SK2).